The chain runs to 308 residues: Ribosomal RNA small subunit methyltransferase A (308 aa).

The S-adenosyl-L-methionine site is built by Asn-35, Val-37, Gly-62, Glu-83, Asp-113, and Asn-136.

This sequence belongs to the class I-like SAM-binding methyltransferase superfamily. rRNA adenine N(6)-methyltransferase family. RsmA subfamily.

It is found in the cytoplasm. The catalysed reaction is adenosine(1518)/adenosine(1519) in 16S rRNA + 4 S-adenosyl-L-methionine = N(6)-dimethyladenosine(1518)/N(6)-dimethyladenosine(1519) in 16S rRNA + 4 S-adenosyl-L-homocysteine + 4 H(+). Its function is as follows. Specifically dimethylates two adjacent adenosines (A1518 and A1519) in the loop of a conserved hairpin near the 3'-end of 16S rRNA in the 30S particle. May play a critical role in biogenesis of 30S subunits. This Bifidobacterium longum (strain NCC 2705) protein is Ribosomal RNA small subunit methyltransferase A.